A 322-amino-acid polypeptide reads, in one-letter code: D-alanine--D-alanine ligase (322 aa).

Positions 110–310 (KAVLAAAGIP…FDRLVFWIVE (201 aa)) constitute an ATP-grasp domain. 137–191 (MPPPYVVKPNAEGSSVGVSLVFEGANGPPRQLAAPDWAFGEQVMVEPYIPGLELA) is an ATP binding site. Mg(2+)-binding residues include aspartate 263, glutamate 277, and asparagine 279.

The protein belongs to the D-alanine--D-alanine ligase family. The cofactor is Mg(2+). It depends on Mn(2+) as a cofactor.

It localises to the cytoplasm. It carries out the reaction 2 D-alanine + ATP = D-alanyl-D-alanine + ADP + phosphate + H(+). It functions in the pathway cell wall biogenesis; peptidoglycan biosynthesis. Cell wall formation. This Caulobacter sp. (strain K31) protein is D-alanine--D-alanine ligase.